We begin with the raw amino-acid sequence, 194 residues long: Prostaglandin-H2 D-isomerase (194 aa).

Residues 1-24 (MAASHTLWMGLVLLGVLGVLQTRA) form the signal peptide. Q25 is modified (pyrrolidone carboxylic acid). A glycan (N-linked (GlcNAc...) asparagine) is linked at N51. Residue C65 is the Nucleophile of the active site. Residue N78 is glycosylated (N-linked (GlcNAc...) asparagine). A disulfide bridge links C89 with C189.

This sequence belongs to the calycin superfamily. Lipocalin family. In terms of assembly, monomer. As to expression, in the male reproductive system, it is expressed in the testis and epididymis, and is secreted into the seminal fluid.

It localises to the rough endoplasmic reticulum. Its subcellular location is the nucleus membrane. The protein localises to the golgi apparatus. The protein resides in the cytoplasm. It is found in the perinuclear region. It localises to the secreted. It carries out the reaction prostaglandin H2 = prostaglandin D2. Its function is as follows. Catalyzes the conversion of PGH2 to PGD2, a prostaglandin involved in smooth muscle contraction/relaxation and a potent inhibitor of platelet aggregation. Involved in a variety of CNS functions, such as sedation, NREM sleep and PGE2-induced allodynia, and may have an anti-apoptotic role in oligodendrocytes. Binds small non-substrate lipophilic molecules, including biliverdin, bilirubin, retinal, retinoic acid and thyroid hormone, and may act as a scavenger for harmful hydrophobic molecules and as a secretory retinoid and thyroid hormone transporter. Possibly involved in development and maintenance of the blood-brain, blood-retina, blood-aqueous humor and blood-testis barrier. It is likely to play important roles in both maturation and maintenance of the central nervous system and male reproductive system. Involved in PLA2G3-dependent maturation of mast cells. PLA2G3 is secreted by immature mast cells and acts on nearby fibroblasts upstream to PTDGS to synthesize PGD2, which in turn promotes mast cell maturation and degranulation via PTGDR. The protein is Prostaglandin-H2 D-isomerase (PTGDS) of Equus caballus (Horse).